A 231-amino-acid chain; its full sequence is Large ribosomal subunit protein uL1 (231 aa).

It belongs to the universal ribosomal protein uL1 family. As to quaternary structure, part of the 50S ribosomal subunit.

Its function is as follows. Binds directly to 23S rRNA. The L1 stalk is quite mobile in the ribosome, and is involved in E site tRNA release. In terms of biological role, protein L1 is also a translational repressor protein, it controls the translation of the L11 operon by binding to its mRNA. This Pseudomonas savastanoi pv. phaseolicola (strain 1448A / Race 6) (Pseudomonas syringae pv. phaseolicola (strain 1448A / Race 6)) protein is Large ribosomal subunit protein uL1.